The primary structure comprises 2293 residues: Protein Ycf2 (2293 aa).

ATP is bound at residue Gly-1647 to Ser-1654.

This sequence belongs to the Ycf2 family.

It localises to the plastid. The protein resides in the chloroplast stroma. In terms of biological role, probable ATPase of unknown function. Its presence in a non-photosynthetic plant (Epifagus virginiana) and experiments in tobacco indicate that it has an essential function which is probably not related to photosynthesis. The chain is Protein Ycf2 from Lobularia maritima (Sweet alyssum).